A 418-amino-acid chain; its full sequence is Gamma-glutamyl phosphate reductase (418 aa).

It belongs to the gamma-glutamyl phosphate reductase family.

It localises to the cytoplasm. It carries out the reaction L-glutamate 5-semialdehyde + phosphate + NADP(+) = L-glutamyl 5-phosphate + NADPH + H(+). It functions in the pathway amino-acid biosynthesis; L-proline biosynthesis; L-glutamate 5-semialdehyde from L-glutamate: step 2/2. In terms of biological role, catalyzes the NADPH-dependent reduction of L-glutamate 5-phosphate into L-glutamate 5-semialdehyde and phosphate. The product spontaneously undergoes cyclization to form 1-pyrroline-5-carboxylate. In Chlorobium limicola (strain DSM 245 / NBRC 103803 / 6330), this protein is Gamma-glutamyl phosphate reductase.